Here is a 267-residue protein sequence, read N- to C-terminus: MILTFIKIKKYRIKYLIIKKQKAFGRNNLGFITCRAKGGGIKRNLYKILDSNFANYGMSFSSAFYVNIIYDSFRRIFLAVYFIINSIIKNIYRYFLLTKNLKIGSQINFGFKAPLKIGNALPLYKILLGSFIYNIEIRYKGKGSLVKNANHNAIILMIGDIYVTVKLPSGEIKLLLKNLFCILGQLEIRRKVNKNIKKHAGFNRKLSIRPKIRGAAMNAVDHPHGGGEGKASVGFKFARTLWGKAFKGIKTRKKNKHLSRFILQHRL.

Belongs to the universal ribosomal protein uL2 family. Part of the 50S ribosomal subunit.

Its subcellular location is the plastid. It is found in the apicoplast. This Toxoplasma gondii protein is Large ribosomal subunit protein uL2c (rpl2).